A 468-amino-acid polypeptide reads, in one-letter code: Adenylyltransferase and sulfurtransferase MOCS3-1 (468 aa).

ATP contacts are provided by residues Gly111, Asp132, 139–143, Lys156, and 200–201; these read NNLHR and DN. Zn(2+) is bound by residues Cys241 and Cys244. Catalysis depends on Cys258, which acts as the Glycyl thioester intermediate; for adenylyltransferase activity. Cys316 and Cys319 together coordinate Zn(2+). The Rhodanese domain occupies 371 to 466; it reads DGEPHLLLDV…WGRDVDPDFP (96 aa). The active-site Cysteine persulfide intermediate; for sulfurtransferase activity is Cys426.

It in the N-terminal section; belongs to the HesA/MoeB/ThiF family. UBA4 subfamily. The cofactor is Zn(2+).

It is found in the cytoplasm. It catalyses the reaction [molybdopterin-synthase sulfur-carrier protein]-C-terminal Gly-Gly + ATP + H(+) = [molybdopterin-synthase sulfur-carrier protein]-C-terminal Gly-Gly-AMP + diphosphate. The catalysed reaction is [molybdopterin-synthase sulfur-carrier protein]-C-terminal Gly-Gly-AMP + S-sulfanyl-L-cysteinyl-[cysteine desulfurase] + AH2 = [molybdopterin-synthase sulfur-carrier protein]-C-terminal-Gly-aminoethanethioate + L-cysteinyl-[cysteine desulfurase] + A + AMP + 2 H(+). Its pathway is tRNA modification; 5-methoxycarbonylmethyl-2-thiouridine-tRNA biosynthesis. The protein operates within cofactor biosynthesis; molybdopterin biosynthesis. Functionally, plays a central role in 2-thiolation of mcm(5)S(2)U at tRNA wobble positions of cytosolic tRNA(Lys), tRNA(Glu) and tRNA(Gln). Also essential during biosynthesis of the molybdenum cofactor. Acts by mediating the C-terminal thiocarboxylation of sulfur carriers URM1 and MOCS2A. Its N-terminus first activates URM1 and MOCS2A as acyl-adenylates (-COAMP), then the persulfide sulfur on the catalytic cysteine is transferred to URM1 and MOCS2A to form thiocarboxylation (-COSH) of their C-terminus. The reaction probably involves hydrogen sulfide that is generated from the persulfide intermediate and that acts as a nucleophile towards URM1 and MOCS2A. Subsequently, a transient disulfide bond is formed. Does not use thiosulfate as sulfur donor; NFS1 probably acting as a sulfur donor for thiocarboxylation reactions. The protein is Adenylyltransferase and sulfurtransferase MOCS3-1 of Zea mays (Maize).